A 30-amino-acid polypeptide reads, in one-letter code: Ampulexin 3 (30 aa).

The signal sequence occupies residues 1 to 17 (MKAIMVLFYVMTLTIIG).

Monomer. As to expression, expressed in venom sac and, to a lesser extent, in venom gland. Not expressed in brain.

It localises to the secreted. In Ampulex compressa (Emerald cockroach wasp), this protein is Ampulexin 3.